The chain runs to 95 residues: Small ribosomal subunit protein bS18 (95 aa).

Belongs to the bacterial ribosomal protein bS18 family. Part of the 30S ribosomal subunit. Forms a tight heterodimer with protein bS6.

Binds as a heterodimer with protein bS6 to the central domain of the 16S rRNA, where it helps stabilize the platform of the 30S subunit. In Rickettsia typhi (strain ATCC VR-144 / Wilmington), this protein is Small ribosomal subunit protein bS18.